The chain runs to 918 residues: DNA ligase 1 (918 aa).

A compositionally biased stretch (polar residues) spans 1–15 (MQRSIMSFFQPTTTE). The tract at residues 1-271 (MQRSIMSFFQ…DPTNYNPSKS (271 aa)) is disordered. Residues 16-54 (GKAKKPEKEIPSSIREKEPPPKVALKERNRAVPESDSPV) are compositionally biased toward basic and acidic residues. 4 positions are modified to phosphoserine: S50, S52, S66, and S67. T78 carries the post-translational modification Phosphothreonine. The span at 81–92 (VQKPVSDSKQSS) shows a compositional bias: low complexity. Over residues 100–114 (PENSPVFNCSPSMDI) the composition is skewed to polar residues. Basic residues predominate over residues 120 to 130 (PKRRTARKQLP). K145 carries the post-translational modification N6-acetyllysine. Residue T195 is modified to Phosphothreonine. K227 is subject to N6-acetyllysine. S230 and S231 each carry phosphoserine. At T234 the chain carries Phosphothreonine. Over residues 240–259 (VKTEVKQEESDTPRKEETKG) the composition is skewed to basic and acidic residues. E566 is an ATP binding site. Catalysis depends on K568, which acts as the N6-AMP-lysine intermediate. Residues R573 and E621 each coordinate ATP. Position 621 (E621) interacts with Mg(2+). Residues 642-644 (KRK) are interaction with target DNA. Residue E720 coordinates Mg(2+). 2 residues coordinate ATP: K725 and K744. A Phosphothreonine modification is found at T798. Phosphoserine is present on residues S801, S908, S909, and S913. The disordered stretch occupies residues 881–918 (DKQPEQATTSDQVASLYRKQSQIQNQQSSDLDSDVEDY). The segment covering 885–910 (EQATTSDQVASLYRKQSQIQNQQSSD) has biased composition (polar residues).

This sequence belongs to the ATP-dependent DNA ligase family. In terms of assembly, interacts with PCNA. Interacts with POLB. The cofactor is Mg(2+).

It localises to the nucleus. It catalyses the reaction ATP + (deoxyribonucleotide)n-3'-hydroxyl + 5'-phospho-(deoxyribonucleotide)m = (deoxyribonucleotide)n+m + AMP + diphosphate.. Functionally, DNA ligase that seals nicks in double-stranded during DNA repair. Also involved in DNA replication and DNA recombination. This chain is DNA ligase 1 (Lig1), found in Rattus norvegicus (Rat).